We begin with the raw amino-acid sequence, 978 residues long: Tyrosine-protein kinase transforming protein fms (978 aa).

At 1–543 (RMPSGPGHYG…IGAHTPLPDE (543 aa)) the chain is on the extracellular side. Ig-like C2-type domains lie at 55 to 134 (PVIQ…IHLY), 141 to 231 (PWKV…KVQK), 236 to 331 (PATL…RVVE), 333 to 431 (AYSN…LTLR), and 434 to 533 (PEVR…WPIS). C76 and C118 are oxidised to a cystine. N-linked (GlcNAc...) asparagine; by host glycans are attached at residues N79, N107, N128, N187, N309, N320, N336, N369, N444, N511, and N524. Cystine bridges form between C161–C211 and C258–C312. C451 and C516 are oxidised to a cystine. The chain crosses the membrane as a helical span at residues 544–568 (LLFTPVLLTCMSIMALLLLLLLLLL). Over 569-978 (YKYKQKPKYQ…PWQRTPPVAR (410 aa)) the chain is Cytoplasmic. The 330-residue stretch at 613-942 (LQFGKTLGTG…PTFQQICSLL (330 aa)) folds into the Protein kinase domain. ATP is bound by residues 619 to 627 (LGTGAFGKV) and K647. D810 functions as the Proton acceptor in the catalytic mechanism. The residue at position 841 (Y841) is a Phosphotyrosine; by autocatalysis. The tract at residues 952–978 (VPNYTNLPSSSSSRLLRPWQRTPPVAR) is disordered. Low complexity predominate over residues 958–969 (LPSSSSSRLLRP). T973 is subject to Phosphothreonine.

The protein belongs to the protein kinase superfamily. Tyr protein kinase family. CSF-1/PDGF receptor subfamily.

The protein localises to the membrane. It catalyses the reaction L-tyrosyl-[protein] + ATP = O-phospho-L-tyrosyl-[protein] + ADP + H(+). Truncated version of the receptor for colony-stimulating factor 1 (CSF-1). The chain is Tyrosine-protein kinase transforming protein fms (V-FMS) from Felidae (cat family).